A 1003-amino-acid chain; its full sequence is Alpha-1,4 glucan phosphorylase L isozyme, chloroplastic/amyloplastic (1003 aa).

Residues 1 to 64 (MASMTMRFHP…RRRSAFSVKC (64 aa)) constitute a chloroplast transit peptide. Disordered stretches follow at residues 71 to 91 (KQKV…SSFA) and 526 to 593 (SSEE…KKLP). Acidic residues predominate over residues 537 to 553 (GEEEETSKEGGEEEEEK). A compositionally biased stretch (basic and acidic residues) spans 569–580 (EVEKAIAEKDGT). Lys-849 bears the N6-(pyridoxal phosphate)lysine mark.

Belongs to the glycogen phosphorylase family. Pyridoxal 5'-phosphate is required as a cofactor. Found predominantly in cotyledons and early seed coat.

It localises to the plastid. It is found in the chloroplast. The protein localises to the amyloplast. It carries out the reaction [(1-&gt;4)-alpha-D-glucosyl](n) + phosphate = [(1-&gt;4)-alpha-D-glucosyl](n-1) + alpha-D-glucose 1-phosphate. Phosphorylase is an important allosteric enzyme in carbohydrate metabolism. Enzymes from different sources differ in their regulatory mechanisms and in their natural substrates. However, all known phosphorylases share catalytic and structural properties. Its function is as follows. The L isoform exhibits higher affinity for unbranched substrates such as glucan-like amylose and maltodextrin. This Vicia faba (Broad bean) protein is Alpha-1,4 glucan phosphorylase L isozyme, chloroplastic/amyloplastic (PHO1).